Reading from the N-terminus, the 214-residue chain is Phosphoenolpyruvate guanylyltransferase (214 aa).

T139, G155, and S158 together coordinate phosphoenolpyruvate.

It belongs to the CofC family.

It catalyses the reaction phosphoenolpyruvate + GTP + H(+) = enolpyruvoyl-2-diphospho-5'-guanosine + diphosphate. It participates in cofactor biosynthesis; coenzyme F420 biosynthesis. Guanylyltransferase that catalyzes the activation of phosphoenolpyruvate (PEP) as enolpyruvoyl-2-diphospho-5'-guanosine, via the condensation of PEP with GTP. It is involved in the biosynthesis of coenzyme F420, a hydride carrier cofactor. This Salinispora arenicola (strain CNS-205) protein is Phosphoenolpyruvate guanylyltransferase.